The sequence spans 265 residues: Phosphatidylglycerol--prolipoprotein diacylglyceryl transferase (265 aa).

The next 4 helical transmembrane spans lie at 10-30 (VAIALGPLKVHWYGLMYLIGI), 56-76 (LVFWVALGVIAGGRLGYVLFY), 87-107 (LILQVWRGGMSFHGGLLGVLL), and 117-137 (GKGFFELMDFIAPLVPIGLGA). An a 1,2-diacyl-sn-glycero-3-phospho-(1'-sn-glycerol)-binding site is contributed by R139. 3 helical membrane-spanning segments follow: residues 172-192 (PSQLYQFALEGVALFAILWFY), 200-220 (MAVSGLFALCYGIFRFIVEFV), and 227-247 (LGYLAFGWLTMGQLLCLPMIL).

This sequence belongs to the Lgt family.

Its subcellular location is the cell inner membrane. It catalyses the reaction L-cysteinyl-[prolipoprotein] + a 1,2-diacyl-sn-glycero-3-phospho-(1'-sn-glycerol) = an S-1,2-diacyl-sn-glyceryl-L-cysteinyl-[prolipoprotein] + sn-glycerol 1-phosphate + H(+). The protein operates within protein modification; lipoprotein biosynthesis (diacylglyceryl transfer). Functionally, catalyzes the transfer of the diacylglyceryl group from phosphatidylglycerol to the sulfhydryl group of the N-terminal cysteine of a prolipoprotein, the first step in the formation of mature lipoproteins. This Azotobacter vinelandii (strain DJ / ATCC BAA-1303) protein is Phosphatidylglycerol--prolipoprotein diacylglyceryl transferase.